Consider the following 33-residue polypeptide: Brevinin-2GRb (33 aa).

Expressed by the skin glands.

The protein resides in the secreted. Its function is as follows. Antimicrobial peptide active against the Gram-positive bacterium S.aureus (MIC=25 uM) and against the Gram-negative bacteria E.coli (MIC=6 uM). Has no antifungal activity against C.albicans. Shows hemolytic activity against human erythrocytes only at high concentrations (LC(50)=180 uM). This Odorrana grahami (Yunnanfu frog) protein is Brevinin-2GRb.